A 388-amino-acid chain; its full sequence is 5-hydroxytryptamine receptor 4 (388 aa).

At 1–19 the chain is on the extracellular side; that stretch reads MDKLDANVSSEEGFGSVEK. An N-linked (GlcNAc...) asparagine glycan is attached at Asn7. Residues 20-44 traverse the membrane as a helical segment; sequence VVLLTFLSTVILMAILGNLLVMVAV. Topologically, residues 45 to 54 are cytoplasmic; sequence CWDRQLRKIK. The chain crosses the membrane as a helical span at residues 55–78; that stretch reads TNYFIVSLAFADLLVSVLVMPFGA. Residues 79 to 92 are Extracellular-facing; it reads IELVQDIWIYGEVF. The helical transmembrane segment at 93–117 threads the bilayer; the sequence is CLVRTSLDVLLTTASIFHLCCISLD. A disulfide bond links Cys93 and Cys184. Residue Asp100 participates in serotonin binding. Over 118–133 the chain is Cytoplasmic; it reads RYYAICCQPLVYRNKM. Residues 134-157 form a helical membrane-spanning segment; the sequence is TPLRIALMLGGCWVIPTFISFLPI. Residues 158–188 lie on the Extracellular side of the membrane; the sequence is MQGWNNIGIIDLIEKRKFNQNSNSTYCVFMV. Residues 189-212 form a helical membrane-spanning segment; it reads NKPYAITCSVVAFYIPFLLMVLAY. At 213–257 the chain is on the cytoplasmic side; that stretch reads YRIYVTAKEHAHQIQMLQRAGASSESRPQSADQHSTHRMRTETKA. The chain crosses the membrane as a helical span at residues 258 to 283; sequence AKTLCIIMGCFCLCWAPFFVTNIVDP. Asn279 provides a ligand contact to serotonin. Over 284–290 the chain is Extracellular; the sequence is FIDYTVP. A helical membrane pass occupies residues 291–314; sequence GQVWTAFLWLGYINSGLNPFLYAF. Topologically, residues 315-388 are cytoplasmic; the sequence is LNKSFRRAFL…PLVAAQPSDT (74 aa).

This sequence belongs to the G-protein coupled receptor 1 family. Interacts (via C-terminus 330-346 AA) with GRK5; this interaction is promoted by 5-HT (serotonin). In terms of assembly, interacts with MAGI2, MPP3, NHERF1 and SNX27 isoforms 1 and 2. Forms a complex including NHERF1 and EZR. As to quaternary structure, interacts with PATJ, NOS1 and SEC23A. As to expression, expressed in ileum, brain, and atrium, but not in the ventricle. Mainly expressed in atria and cardiac ventricle. In terms of tissue distribution, expressed in all cardiovascular tissues analyzed.

It is found in the cell membrane. Its subcellular location is the endosome membrane. G-protein coupled receptor for 5-hydroxytryptamine (serotonin), a biogenic hormone that functions as a neurotransmitter, a hormone and a mitogen. Ligand binding causes a conformation change that triggers signaling via guanine nucleotide-binding proteins (G proteins) and modulates the activity of downstream effectors. HTR4 is coupled to G(s) G alpha proteins and mediates activation of adenylate cyclase activity. This is 5-hydroxytryptamine receptor 4 from Homo sapiens (Human).